The following is an 89-amino-acid chain: Small ribosomal subunit protein uS15 (89 aa).

Residues 1–18 (MSLDTAEKQKLIENHQVH) show a composition bias toward basic and acidic residues. A disordered region spans residues 1-23 (MSLDTAEKQKLIENHQVHPTDTG).

Belongs to the universal ribosomal protein uS15 family. Part of the 30S ribosomal subunit. Forms a bridge to the 50S subunit in the 70S ribosome, contacting the 23S rRNA.

Functionally, one of the primary rRNA binding proteins, it binds directly to 16S rRNA where it helps nucleate assembly of the platform of the 30S subunit by binding and bridging several RNA helices of the 16S rRNA. In terms of biological role, forms an intersubunit bridge (bridge B4) with the 23S rRNA of the 50S subunit in the ribosome. This Prochlorococcus marinus (strain MIT 9301) protein is Small ribosomal subunit protein uS15.